Reading from the N-terminus, the 291-residue chain is 4-hydroxy-tetrahydrodipicolinate synthase (291 aa).

Thr-44 is a binding site for pyruvate. Catalysis depends on Tyr-132, which acts as the Proton donor/acceptor. Lys-160 (schiff-base intermediate with substrate) is an active-site residue. Residue Val-202 participates in pyruvate binding.

This sequence belongs to the DapA family. As to quaternary structure, homotetramer; dimer of dimers.

The protein localises to the cytoplasm. It carries out the reaction L-aspartate 4-semialdehyde + pyruvate = (2S,4S)-4-hydroxy-2,3,4,5-tetrahydrodipicolinate + H2O + H(+). It functions in the pathway amino-acid biosynthesis; L-lysine biosynthesis via DAP pathway; (S)-tetrahydrodipicolinate from L-aspartate: step 3/4. In terms of biological role, catalyzes the condensation of (S)-aspartate-beta-semialdehyde [(S)-ASA] and pyruvate to 4-hydroxy-tetrahydrodipicolinate (HTPA). The sequence is that of 4-hydroxy-tetrahydrodipicolinate synthase from Clostridium perfringens (strain 13 / Type A).